A 348-amino-acid chain; its full sequence is Carbamoyl phosphate synthase small chain (348 aa).

Positions 1–167 are CPSase; it reads MKRYLITSDG…VKNIRGKGER (167 aa). L-glutamine is bound by residues serine 45, glycine 213, and glycine 215. A Glutamine amidotransferase type-1 domain is found at 168–348; the sequence is RILFIDLGSK…RRRTEDAAKG (181 aa). Residue cysteine 242 is the Nucleophile of the active site. L-glutamine contacts are provided by phenylalanine 243, glutamine 246, asparagine 282, glycine 284, and tyrosine 285. Residues histidine 321 and glutamate 323 contribute to the active site.

This sequence belongs to the CarA family. Composed of two chains; the small (or glutamine) chain promotes the hydrolysis of glutamine to ammonia, which is used by the large (or ammonia) chain to synthesize carbamoyl phosphate. Tetramer of heterodimers (alpha,beta)4.

It carries out the reaction hydrogencarbonate + L-glutamine + 2 ATP + H2O = carbamoyl phosphate + L-glutamate + 2 ADP + phosphate + 2 H(+). The enzyme catalyses L-glutamine + H2O = L-glutamate + NH4(+). It participates in amino-acid biosynthesis; L-arginine biosynthesis; carbamoyl phosphate from bicarbonate: step 1/1. It functions in the pathway pyrimidine metabolism; UMP biosynthesis via de novo pathway; (S)-dihydroorotate from bicarbonate: step 1/3. Functionally, small subunit of the glutamine-dependent carbamoyl phosphate synthetase (CPSase). CPSase catalyzes the formation of carbamoyl phosphate from the ammonia moiety of glutamine, carbonate, and phosphate donated by ATP, constituting the first step of 2 biosynthetic pathways, one leading to arginine and/or urea and the other to pyrimidine nucleotides. The small subunit (glutamine amidotransferase) binds and cleaves glutamine to supply the large subunit with the substrate ammonia. The chain is Carbamoyl phosphate synthase small chain from Thermoplasma acidophilum (strain ATCC 25905 / DSM 1728 / JCM 9062 / NBRC 15155 / AMRC-C165).